Reading from the N-terminus, the 396-residue chain is Ribosomal RNA large subunit methyltransferase I (396 aa).

One can recognise a PUA domain in the interval 2–79 (SVFIYLVKGR…KEETVDLDFF (78 aa)).

Belongs to the methyltransferase superfamily. RlmI family.

It localises to the cytoplasm. It carries out the reaction cytidine(1962) in 23S rRNA + S-adenosyl-L-methionine = 5-methylcytidine(1962) in 23S rRNA + S-adenosyl-L-homocysteine + H(+). Its function is as follows. Specifically methylates the cytosine at position 1962 (m5C1962) of 23S rRNA. The sequence is that of Ribosomal RNA large subunit methyltransferase I from Aeromonas salmonicida (strain A449).